A 481-amino-acid polypeptide reads, in one-letter code: Tryptophan 5-hydroxylase (481 aa).

The 76-residue stretch at 56–131 (SVIFSLKNEI…NVISMSPPEN (76 aa)) folds into the ACT domain. Positions 272, 294, and 302 each coordinate L-tryptophan. Positions 309, 314, and 354 each coordinate Fe cation. Positions 373 and 403 each coordinate L-tryptophan.

The protein belongs to the biopterin-dependent aromatic amino acid hydroxylase family. As to quaternary structure, homotetramer. Fe(2+) serves as cofactor.

It carries out the reaction (6R)-L-erythro-5,6,7,8-tetrahydrobiopterin + L-tryptophan + O2 = 5-hydroxy-L-tryptophan + (4aS,6R)-4a-hydroxy-L-erythro-5,6,7,8-tetrahydrobiopterin. It functions in the pathway aromatic compound metabolism; serotonin biosynthesis; serotonin from L-tryptophan: step 1/2. Functionally, oxidizes L-tryptophan to 5-hydroxy-l-tryptophan in the rate-determining step of serotonin biosynthesis. This is Tryptophan 5-hydroxylase (tph1) from Xenopus laevis (African clawed frog).